The primary structure comprises 460 residues: Keratin, type I cytoskeletal 27 (460 aa).

A head region spans residues 1-83 (MSVRFSSASR…GNEHGLLSGN (83 aa)). Positions 84–119 (EKVTMQNLNDRLASYLDNVRALEEANADLEQKIKGW) are coil 1A. The IF rod domain maps to 84-399 (EKVTMQNLND…RLIDGEDGSC (316 aa)). Residues 120 to 141 (YEKFGPGSCRGLDHDYSRYFTV) are linker 1. The segment at 142–233 (IDDLRNQIIS…KNHEEEMKAL (92 aa)) is coil 1B. Positions 234-256 (QCAAGGNVNVEMNAAPGVDLTVL) are linker 12. Residues 257 to 395 (LNNMRAEYEA…ETYCRLIDGE (139 aa)) form a coil 2 region. Residues 396–460 (DGSCTKSKGY…NMKSEQRVPS (65 aa)) are tail. Positions 429-460 (DPRGKVPSSRVHTVEEKSTKVNNMKSEQRVPS) are disordered. The span at 448–460 (KVNNMKSEQRVPS) shows a compositional bias: polar residues.

This sequence belongs to the intermediate filament family. Heterotetramer of two type I and two type II keratins. Interacts with KRT6A to form filaments.

The protein localises to the cytoplasm. In terms of biological role, essential for the proper assembly of type I and type II keratin protein complexes and formation of keratin intermediate filaments in the inner root sheath (irs). The sequence is that of Keratin, type I cytoskeletal 27 from Capra hircus (Goat).